The sequence spans 359 residues: Type-1 angiotensin II receptor B (359 aa).

The Extracellular portion of the chain corresponds to 1–25; it reads MILNSSIEDGIKRIQDDCPKAGRHN. N-linked (GlcNAc...) asparagine glycosylation is present at Asn-4. Residues Gln-15 and Asp-17 each coordinate angiotensin II. 2 disulfide bridges follow: Cys-18-Cys-274 and Cys-101-Cys-180. A helical membrane pass occupies residues 26-55; the sequence is YIFVMIPTLYSIIFVVGIFGNSLVVIVIYF. Topologically, residues 56–61 are cytoplasmic; sequence YMKLKT. The chain crosses the membrane as a helical span at residues 62-89; the sequence is VASVFLLNLALADLCFLLTLPLWAVYTA. Topologically, residues 90–98 are extracellular; that stretch reads MEYQWPFGN. Residues 99–125 traverse the membrane as a helical segment; sequence HLCKIASASVSFNLYASVFLLTCLSID. The Cytoplasmic portion of the chain corresponds to 126 to 141; the sequence is RYLAIVHPMKSRLRRT. Residues 142 to 165 traverse the membrane as a helical segment; sequence MLVAKVTCIIIWLMAGLASLPAVI. Residues 166–190 lie on the Extracellular side of the membrane; that stretch reads HRNVYFIENTNITVCAFHYESQNST. Arg-167 lines the angiotensin II pocket. An N-linked (GlcNAc...) asparagine glycan is attached at Asn-176. 3 residues coordinate angiotensin II: Phe-182, His-183, and Tyr-184. The N-linked (GlcNAc...) asparagine glycan is linked to Asn-188. Residues 191 to 216 form a helical membrane-spanning segment; it reads LPIGLGLTKNILGFVFPFVIILTSYT. Lys-199 is an angiotensin II binding site. Residues 217–239 are Cytoplasmic-facing; that stretch reads LIWKALKKAYKIQKNTPRNDDIF. A helical membrane pass occupies residues 240 to 268; the sequence is RIIMAIVLFFFFSWVPHQIFSFLDVLIQL. Over 269–278 the chain is Extracellular; it reads GVIHDCEIAD. The chain crosses the membrane as a helical span at residues 279–304; it reads VVDTAMPITICIAYFNNCLNPLFYGF. The Cytoplasmic segment spans residues 305–359; the sequence is LGKKFKRYFLQLLKYIPPKARSHAGLSTKMSTLSYRPSDNMSSSARKSAYCFEVE. A lipid anchor (S-palmitoyl cysteine) is attached at Cys-355.

This sequence belongs to the G-protein coupled receptor 1 family. As to quaternary structure, interacts with MAS1. Interacts with ARRB1. Interacts with FLNA (via filamin repeat 21); increases PKA-mediated phosphorylation of FLNA. In terms of processing, C-terminal Ser or Thr residues may be phosphorylated.

The protein localises to the cell membrane. Functionally, receptor for angiotensin II, a vasoconstricting peptide, which acts as a key regulator of blood pressure and sodium retention by the kidney. The activated receptor in turn couples to G-alpha proteins G(q) (GNAQ, GNA11, GNA14 or GNA15) and thus activates phospholipase C and increases the cytosolic Ca(2+) concentrations, which in turn triggers cellular responses such as stimulation of protein kinase C. This is Type-1 angiotensin II receptor B (Agtr1b) from Mus musculus (Mouse).